The primary structure comprises 333 residues: Trans-enoyl reductase apdC (333 aa).

Position 45-48 (45-48 (FDAK)) interacts with NADP(+). 131-138 (VGLATVGM) is a binding site for substrate. Residues 167–170 (SPHN), tyrosine 185, and 232–233 (LD) each bind NADP(+). 252–256 (SVTMY) contributes to the substrate binding site. 321–322 (VS) contributes to the NADP(+) binding site.

This sequence belongs to the zinc-containing alcohol dehydrogenase family. Monomer.

The protein operates within secondary metabolite biosynthesis. Trans-enoyl reductase; part of the gene cluster that mediates the biosynthesis of aspyridones. The polyketide-amino acid backbone preaspyridone A is first assembled by the PKS-NRPS hybrid apdA. The assembly of preaspyridone A is initiated by loading of malonyl-CoA onto apdA, followed by decarboxylation to yield the acetyl starter unit. The growing polyketide chain then elongates into a tetraketide. The adpA PKS module catalyzes three Claisen condensations, as well as beta-keto processing and methylation. Alpha-methylation step during polyketide synthesis is a prerequisite and a key checkpoint for chain transfer between PKS and NRPS modules. The downstream NRPS module contains the condensation (C), adenylation (A), and thiolation (T) domains and catalyzes the incorporation of tyrosine via the formation of the L-tyrosinyl-thioester and the amide linkage between L-tyrosinyl-thioester and the tetraketide. The bimodular assembly line is terminated with a reductase (R) domain that facilitates formation and release of the tetramic acid product. Because apdA lacks a designated enoylreductase (ER) domain, the required activity is provided the enoyl reductase apdC. ApdC appears to operate with different stereoselectivity in different PKS cycle. Combined with apdC, apdA is proposed to synthesize preaspyridone A via about 20 enzymatic steps. A number of oxidative steps performed successively by the cytochrome P450 monooxygenases apdE and apdB are required for the conversion of preaspyridone A to aspyridone A. The cytochrome P450 monooxygenase apdE is responsible for the oxidative dephenylation of preaspyridone A. Finally, the predicted FAD-dependent monooxygenase apdD and the acyl-CoA dehydrogenase apdG may be involved in the transformation of aspyridone A into aspyridone B. In Emericella nidulans (strain FGSC A4 / ATCC 38163 / CBS 112.46 / NRRL 194 / M139) (Aspergillus nidulans), this protein is Trans-enoyl reductase apdC.